We begin with the raw amino-acid sequence, 4592 residues long: Intermembrane lipid transfer protein vps13D (4592 aa).

One can recognise a Chorein N-terminal domain in the interval 3–102; that stretch reads FESVVAEVID…SSTNVSSNYS (100 aa). Disordered regions lie at residues 95-142, 157-199, 286-307, 445-529, 574-605, 826-861, 1040-1083, 1219-1249, 1655-1717, 1855-1886, 1971-2001, 2025-2056, and 2245-2270; these read TNVS…TASQ, LDKK…IDSQ, STTS…SSSS, KKDD…IKGI, SNST…LSPM, NYNN…QQGI, TTSP…KRQW, YFKN…EKKP, QQQE…QQSN, SNNN…NSLF, TSSL…TTTS, PLIN…EQQQ, and NNNN…NIIN. Composition is skewed to low complexity over residues 117–139 and 172–199; these read SSSN…TTST and KSTN…IDSQ. Residues 437–517 are a coiled coil; sequence KNATIKLNKK…KKKEEKGKSK (81 aa). A compositionally biased stretch (basic and acidic residues) spans 445–457; the sequence is KKDDKKDDKKDDI. Residues 458–474 are compositionally biased toward low complexity; the sequence is NSSSSSIGSSNSSNNTP. Residues 475–529 show a composition bias toward basic and acidic residues; sequence TKDKNKEKEKDKEKEKEKEKKKEKEKLKLEEKKKKKEEKGKSKSKDSKKNKIKGI. The segment covering 574–591 has biased composition (low complexity); the sequence is SNSTTTNNSNNNSSSSPN. Residues 592–603 are compositionally biased toward polar residues; sequence ILATSPSNNSLS. The span at 829 to 838 shows a compositional bias: low complexity; that stretch reads NQSSSSSSSS. The span at 1040–1059 shows a compositional bias: polar residues; it reads TTSPTFNSLNNKPSTLQNNH. A compositionally biased stretch (low complexity) spans 1064–1076; sequence NGNSSNNNNTDSP. Over residues 1234–1244 the composition is skewed to acidic residues; it reads NTEDDEQEEEE. Low complexity-rich tracts occupy residues 1669–1689 and 1702–1715; these read KSIN…LRKS and QQQQ…QQQQ. Residues 2037–2048 show a composition bias toward low complexity; it reads SKSSSSKSSSSK. The stretch at 2321–2354 is one TPR 1 repeat; it reads TLQINDLGANIISIGNKSTSIKCFLRSIRLSDSR. Disordered stretches follow at residues 2456-2489, 2862-2882, 3006-3035, 3106-3129, 3356-3384, 3560-3580, and 3630-3679; these read KTNN…SIST, AVST…NNNG, GEQK…SSSS, NSSG…SSSN, KLPT…KRTT, NSLK…HRHN, and STNH…SKLK. 3 stretches are compositionally biased toward low complexity: residues 2458–2478, 2864–2880, and 3015–3035; these read NNNN…NNNN, STSN…SNNN, and TSTS…SSSS. The segment covering 3358-3384 has biased composition (low complexity); it reads PTSPQTSSSSSPPPATTTTSTTTKRTT. A compositionally biased stretch (basic residues) spans 3569 to 3580; sequence KSKKQQQQHRHN. Residues 3640 to 3679 show a composition bias toward low complexity; sequence SSTFNNSSNDNINNGNSNNNTSNSLSPPSSSSSINLSKLK. Residues 3789–3822 form a TPR 2 repeat; sequence EVPKPYLGRVDIKDNDTHTSIHFYDQDTEYSPFR. 2 stretches are compositionally biased toward low complexity: residues 3872-3894 and 4111-4135; these read TTTT…NNNN and QQLQ…NPIN. Disordered stretches follow at residues 3872–3897 and 4105–4135; these read TTTT…NQYI and KKHK…NPIN.

The protein localises to the membrane. Functionally, mediates the transfer of lipids between membranes at organelle contact sites. The chain is Intermembrane lipid transfer protein vps13D (vps13D) from Dictyostelium discoideum (Social amoeba).